The chain runs to 471 residues: E3 SUMO-protein ligase EGR2 (471 aa).

Low complexity predominate over residues 127-143 (PASTTASSNVTSASPNP). The interval 127 to 177 (PASTTASSNVTSASPNPLATGPLGVCTMSQTQPDLDHLYSPPPPPPYSGCA) is disordered. Lys-246 bears the N6-acetyllysine; by EP300 mark. Disordered stretches follow at residues 273–301 (GGPS…AAAA) and 313–336 (RPIL…RPYP). Gly residues predominate over residues 280–289 (TGPGASGGSE). 3 consecutive C2H2-type zinc fingers follow at residues 335–359 (YPCP…IRIH), 365–387 (FQCR…IRTH), and 393–415 (FACD…TKIH). Positions 406-471 (DERKRHTKIH…GPCSSRTRTP (66 aa)) are disordered. The segment covering 410–420 (RHTKIHLRQKE) has biased composition (basic residues). A compositionally biased stretch (low complexity) spans 424–437 (SAPSSSVPAASTAS).

The protein belongs to the EGR C2H2-type zinc-finger protein family. As to quaternary structure, interacts with HCFC1. Interacts with WWP2. Interacts with UBC9. Interacts with CITED1. Interacts (via phosphorylated form) with SFN. In terms of processing, ubiquitinated by WWP2 leading to proteasomal degradation. Acetylated at Lys-246. May be deacetylated by HDAC6, HDAC10 or SIRT1.

It localises to the nucleus. It participates in protein modification; protein sumoylation. Sequence-specific DNA-binding transcription factor. Plays a role in hindbrain segmentation by regulating the expression of a subset of homeobox containing genes and in Schwann cell myelination by regulating the expression of genes involved in the formation and maintenance of myelin. Binds to two EGR2-consensus sites EGR2A (5'-CTGTAGGAG-3') and EGR2B (5'-ATGTAGGTG-3') in the HOXB3 enhancer and promotes HOXB3 transcriptional activation. Binds to specific DNA sites located in the promoter region of HOXA4, HOXB2 and ERBB2. Regulates hindbrain segmentation by controlling the expression of Hox genes, such as HOXA4, HOXB3 and HOXB2, and thereby specifying odd and even rhombomeres. Promotes the expression of HOXB3 in the rhombomere r5 in the hindbrain. Regulates myelination in the peripheral nervous system after birth, possibly by regulating the expression of myelin proteins, such as MPZ, and by promoting the differentiation of Schwann cells. Involved in the development of the jaw openener musculature, probably by playing a role in its innervation through trigeminal motor neurons. May play a role in adipogenesis, possibly by regulating the expression of CEBPB. In terms of biological role, E3 SUMO-protein ligase helping SUMO1 conjugation to its coregulators NAB1 and NAB2, whose sumoylation down-regulates EGR2 transcriptional activity. The protein is E3 SUMO-protein ligase EGR2 (EGR2) of Sus scrofa (Pig).